The chain runs to 616 residues: Cytochrome c oxidase subunit 1 (616 aa).

The helical transmembrane segment at 28–48 (HLYLISGGFFFLLGGLEALFI) threads the bilayer. Histidine 72 is a binding site for Fe(II)-heme a. 6 consecutive transmembrane segments (helical) span residues 75 to 95 (TMIFLAAMPLVFAFMNAVVPL), 102 to 122 (VAFPFLNALGFWMFFFGGLFL), 158 to 178 (GLQISGFGTIMGAINFLVTII), 198 to 218 (FVTSALILFAFPPLTVGLIFM), 243 to 263 (LFWVFGHPEVYILVLPAFGIF), and 275 to 295 (LFGYSSMVFATVLIAFLGFMV). The Cu cation site is built by histidine 249 and tyrosine 253. Positions 249 to 253 (HPEVY) form a cross-link, 1'-histidyl-3'-tyrosine (His-Tyr). The Cu cation site is built by histidine 298 and histidine 299. 7 helical membrane passes run 303–323 (VGMGPIANAIFAVATMTIAVP), 349–369 (AVAFIPSFVMGGVTGVMLASA), 380–400 (FVVAHFHYVIVGGVVFALLAG), 420–440 (ITFWLFFIGFHLTFFIQHFLG), 463–483 (ISTIGAFFIAAATVILLINIV), 553–573 (SSFLPFVIAFGLFVAAFGFTY), and 577–597 (AGWGLPVAILGLLITLGSMFL). Histidine 384 provides a ligand contact to Fe(II)-heme o. Residue histidine 384 participates in heme a3 binding. A Fe(II)-heme a-binding site is contributed by histidine 386.

It belongs to the heme-copper respiratory oxidase family. It depends on Cu(2+) as a cofactor. Requires heme as cofactor.

The protein localises to the cell membrane. It catalyses the reaction 4 Fe(II)-[cytochrome c] + O2 + 8 H(+)(in) = 4 Fe(III)-[cytochrome c] + 2 H2O + 4 H(+)(out). It functions in the pathway energy metabolism; oxidative phosphorylation. Functionally, cytochrome c oxidase is the component of the respiratory chain that catalyzes the reduction of oxygen to water. Subunits 1-3 form the functional core of the enzyme complex. Co I is the catalytic subunit of the enzyme. Electrons originating in cytochrome c are transferred via the copper A center of subunit 2 and heme a of subunit 1 to the bimetallic center formed by heme a3 and copper B. This cytochrome c oxidase shows proton pump activity across the membrane in addition to the electron transfer. This chain is Cytochrome c oxidase subunit 1 (ctaD), found in Bacillus sp. (strain PS3).